Reading from the N-terminus, the 546-residue chain is Chaperonin GroEL (546 aa).

Residues 30 to 33 (TLGP), lysine 51, 87 to 91 (DGTTT), glycine 415, and aspartate 495 each bind ATP.

This sequence belongs to the chaperonin (HSP60) family. As to quaternary structure, forms a cylinder of 14 subunits composed of two heptameric rings stacked back-to-back. Interacts with the co-chaperonin GroES.

Its subcellular location is the cytoplasm. The catalysed reaction is ATP + H2O + a folded polypeptide = ADP + phosphate + an unfolded polypeptide.. Its function is as follows. Together with its co-chaperonin GroES, plays an essential role in assisting protein folding. The GroEL-GroES system forms a nano-cage that allows encapsulation of the non-native substrate proteins and provides a physical environment optimized to promote and accelerate protein folding. In Brucella melitensis biotype 2 (strain ATCC 23457), this protein is Chaperonin GroEL.